We begin with the raw amino-acid sequence, 580 residues long: Amino-acid acetyltransferase, mitochondrial (580 aa).

In terms of domain architecture, N-acetyltransferase spans 403–560; that stretch reads LTMQNLFDDK…KLRHQNGVVD (158 aa).

Belongs to the acetyltransferase family.

The protein resides in the mitochondrion. It carries out the reaction L-glutamate + acetyl-CoA = N-acetyl-L-glutamate + CoA + H(+). It functions in the pathway amino-acid biosynthesis; L-arginine biosynthesis; N(2)-acetyl-L-ornithine from L-glutamate: step 1/4. N-acetylglutamate synthase involved in arginine biosynthesis. In Candida albicans (strain SC5314 / ATCC MYA-2876) (Yeast), this protein is Amino-acid acetyltransferase, mitochondrial (ARG2).